We begin with the raw amino-acid sequence, 91 residues long: RING finger protein Z (91 aa).

Gly-2 is lipidated: N-myristoyl glycine; by host. The segment at 35-71 (CKCCWFQDKNLVECSDHYLCLKCISSMLKRGKNCEIC) adopts an RING-type; atypical zinc-finger fold. The short motif at 85 to 88 (PTAP) is the PTAP/PSAP motif element.

This sequence belongs to the arenaviridae Z protein family. In terms of assembly, interacts with protein NP; this interaction probably directs the encapsidated genome to budding sites. Interacts (via RING domain) with polymerase L; this interaction inhibits viral transcription and replication, Z partially blocks the product exit tunnel for the releasing nascent RNA product. Interacts with the glycoprotein complex; this interaction plays a role in virion budding. Interacts with host eIF4E; this interaction results in eIF4E reduced affinity for its substrate, the 5'-m7 G cap structure. Interacts (via late-budding domain) with host TSG101; this interaction is essential for budding and release of viral particles. Interacts with host RPLP0; this interaction may serve to load ribosome-like particles inside the virion. Interacts with host PML; this interaction induces PML bodies redistribution in the cytoplasm upon viral infection. Myristoylation is required for the role of RING finger protein Z in assembly and budding.

It localises to the virion. The protein resides in the host cytoplasm. It is found in the host perinuclear region. The protein localises to the host cell membrane. Its function is as follows. Plays a crucial role in virion assembly and budding. Expressed late in the virus life cycle, it acts as an inhibitor of viral transcription and RNA synthesis by interacting with the viral polymerase L. Presumably recruits the NP encapsidated genome to cellular membranes at budding sites via direct interaction with NP. Plays critical roles in the final steps of viral release by interacting with host TSG101, a member of the vacuolar protein-sorting pathway and using other cellular host proteins involved in vesicle formation pathway. The budding of the virus progeny occurs after association of protein Z with the viral glycoprotein complex SSP-GP1-GP2 at the cell periphery, step that requires myristoylation of protein Z. Also selectively represses protein production by associating with host eIF4E. In cell-based minigenome assay, has an inhibitory effect on the ribonucleoprotein machinery (vRNP), which is responsible for the replication and transcription of the viral genome. This Latino mammarenavirus (isolate Rat/Bolivia/MARU 1924/1965) (LATV) protein is RING finger protein Z.